Here is a 154-residue protein sequence, read N- to C-terminus: Large ribosomal subunit protein uL13 (154 aa).

The tract at residues 129–154 (SQHPHEAQQPEALDVGTLNRKNKRIA) is disordered.

Belongs to the universal ribosomal protein uL13 family. As to quaternary structure, part of the 50S ribosomal subunit.

This protein is one of the early assembly proteins of the 50S ribosomal subunit, although it is not seen to bind rRNA by itself. It is important during the early stages of 50S assembly. The sequence is that of Large ribosomal subunit protein uL13 from Bartonella bacilliformis (strain ATCC 35685 / KC583 / Herrer 020/F12,63).